Reading from the N-terminus, the 623-residue chain is Glutathione import ATP-binding protein GsiA (623 aa).

ABC transporter domains are found at residues 15–269 (VSGL…QTLL) and 325–564 (LRSG…RKLM). ATP contacts are provided by residues 49 to 56 (GESGSGKS) and 357 to 364 (GESGSGKS).

The protein belongs to the ABC transporter superfamily. Glutathione importer (TC 3.A.1.5.11) family. As to quaternary structure, the complex is composed of two ATP-binding proteins (GsiA), two transmembrane proteins (GsiC and GsiD) and a solute-binding protein (GsiB).

The protein resides in the cell inner membrane. It catalyses the reaction glutathione(out) + ATP + H2O = glutathione(in) + ADP + phosphate + H(+). In terms of biological role, part of the ABC transporter complex GsiABCD involved in glutathione import. Responsible for energy coupling to the transport system. The chain is Glutathione import ATP-binding protein GsiA from Salmonella typhimurium (strain LT2 / SGSC1412 / ATCC 700720).